The chain runs to 447 residues: UDP-glycosyltransferase 76B1 (447 aa).

Residues S269, 327–328 (WA), 345–353 (HCGWNSTLE), and 367–370 (FGDQ) each bind UDP-alpha-D-glucose.

The protein belongs to the UDP-glycosyltransferase family. As to expression, expressed in roots, leaves, hydathodes, sepals and style.

Glycosylates the amino acid-related molecules isoleucic acid (2-hydroxy-3-methylpentanoic acid) and valic acid (2-hydroxy-3-methylbutyric acid). Acts as a negative regulator of salicylic acid (SA)-dependent plant defense in the absence of pathogens and promotes the jasmonate (JA) response. Negatively influences the onset of senescence. The sequence is that of UDP-glycosyltransferase 76B1 from Arabidopsis thaliana (Mouse-ear cress).